The chain runs to 161 residues: C-type lectin lectoxin-Lio3 (161 aa).

The first 23 residues, 1 to 23 (MRRFIFMSLGLLVLAFSLSGIGA), serve as a signal peptide directing secretion. 3 disulfides stabilise this stretch: Cys-27–Cys-38, Cys-55–Cys-154, and Cys-129–Cys-146. The region spanning 34–155 (HNISCYKLFT…CGLLHYFICQ (122 aa)) is the C-type lectin domain. Residue Asn-35 is glycosylated (N-linked (GlcNAc...) asparagine). The Mannose-binding motif lies at 117 to 119 (KGE). 3 residues coordinate Ca(2+): Glu-127, Asn-142, and Asp-143.

The protein belongs to the true venom lectin family. In terms of tissue distribution, expressed by the venom gland.

Its subcellular location is the secreted. Its function is as follows. Mannose-binding lectin which recognizes specific carbohydrate structures and agglutinates a variety of animal cells by binding to cell-surface glycoproteins and glycolipids. May be a calcium-dependent lectin. This is C-type lectin lectoxin-Lio3 from Erythrolamprus poecilogyrus (Water snake).